Here is a 677-residue protein sequence, read N- to C-terminus: Protein PALS1 (677 aa).

Positions 1-347 (MTTSHMNGYV…AQIKSPPIKE (347 aa)) are required for the correct localization of PALS1 and PATJ at cell-cell contacts and the normal formation of tight junctions and adherens junctions. Positions 39-81 (ELGARTLPVRRSAQLEKIRQQQEDRRRREEEGRSRQELDLNSS) are disordered. Over residues 51-76 (AQLEKIRQQQEDRRRREEEGRSRQEL) the composition is skewed to basic and acidic residues. L27 domains lie at 121–178 (ALLE…NRPS) and 180–236 (PYPL…MQLE). The PDZ domain maps to 258 to 338 (IVRIEKAKDI…VLSFVLIPSA (81 aa)). An SH3 domain is found at 347–419 (ETVVHVKAHF…PGKSFQQQRE (73 aa)). In terms of domain architecture, Guanylate kinase-like spans 481–662 (KRPIALIGPP…SYQELLRLIN (182 aa)). ATP is bound at residue 488–495 (GPPNCGQN). Positions 506–526 (PDRFAGPVPHTTRSRRDAEAN) are disordered.

The protein belongs to the MAGUK family. In terms of tissue distribution, expressed in the retina and in the neural tube.

It localises to the apical cell membrane. It is found in the cell junction. The protein localises to the tight junction. Its function is as follows. Plays a role in tight junction biogenesis and in the establishment of cell polarity in epithelial cells. Also involved in adherens junction biogenesis. Required for polarized epithelial organization, cell-cell adhesion and remodeling of myocardial cells during heart tube elongation during embryogenesis. Functions in cellular patterning of the retina and development of the retinal pigmented epithelium. Also required for embryo body axis specification. The sequence is that of Protein PALS1 (pals1a) from Danio rerio (Zebrafish).